Reading from the N-terminus, the 199-residue chain is MISIFIAEDQQMLLGALGSLLNLEDDMEVVGKGTTGQDAVDFVKKRQPDVCIMDIEMPGKTGLEAAEELKDTGCKIIILTTFARPGYFQRAIKAGVKGYLLKDSPSEELANAIRSVMNGKRIYAPELMEDLYSEANPLTDREKEVLELVADGKNTKEIAQELSIKSGTVRNYISMILEKLEVKNRIEAITRSKEKGWFK.

One can recognise a Response regulatory domain in the interval 3–117 (SIFIAEDQQM…ELANAIRSVM (115 aa)). Aspartate 54 is modified (4-aspartylphosphate). The 66-residue stretch at 131 to 196 (LYSEANPLTD…EAITRSKEKG (66 aa)) folds into the HTH luxR-type domain. The segment at residues 155 to 174 (TKEIAQELSIKSGTVRNYIS) is a DNA-binding region (H-T-H motif).

In terms of processing, phosphorylated by DesK.

The protein resides in the cytoplasm. Functionally, member of the two-component regulatory system DesR/DesK, responsible for cold induction of the des gene coding for the Delta5 acyl-lipid desaturase. This chain is Transcriptional regulatory protein DesR (desR), found in Bacillus subtilis (strain 168).